Reading from the N-terminus, the 1693-residue chain is uncharacterized protein (1693 aa).

WD repeat units lie at residues 1008–1042 (HHEG…YLWS), 1053–1083 (GHQE…KLWQ), 1094–1124 (GHED…RIWN), 1135–1165 (GHAD…RLWD), 1176–1206 (GHTS…RLWD), 1217–1247 (GHQN…RVWS), 1258–1288 (GHDH…RLWT), 1299–1329 (GHQK…RQWD), 1340–1370 (GHSH…RLWT), 1381–1411 (DHQG…QLWN), 1422–1452 (GHQD…RVWN), 1463–1493 (HYEK…GIWE), 1504–1534 (GHEG…RIWD), 1545–1575 (GHQS…RLWD), 1586–1616 (GHQG…RLWD), and 1627–1657 (GHGN…KLWP).

This is an uncharacterized protein from Synechocystis sp. (strain ATCC 27184 / PCC 6803 / Kazusa).